A 421-amino-acid polypeptide reads, in one-letter code: Gamma-glutamyl phosphate reductase (421 aa).

Belongs to the gamma-glutamyl phosphate reductase family.

The protein resides in the cytoplasm. The enzyme catalyses L-glutamate 5-semialdehyde + phosphate + NADP(+) = L-glutamyl 5-phosphate + NADPH + H(+). Its pathway is amino-acid biosynthesis; L-proline biosynthesis; L-glutamate 5-semialdehyde from L-glutamate: step 2/2. Functionally, catalyzes the NADPH-dependent reduction of L-glutamate 5-phosphate into L-glutamate 5-semialdehyde and phosphate. The product spontaneously undergoes cyclization to form 1-pyrroline-5-carboxylate. The protein is Gamma-glutamyl phosphate reductase of Acinetobacter baumannii (strain ATCC 17978 / DSM 105126 / CIP 53.77 / LMG 1025 / NCDC KC755 / 5377).